The following is a 664-amino-acid chain: Putative carboxypeptidase suro-1 (664 aa).

Residues 1–23 (MRYLCKSILLAVHTILLVGSVCC) form the signal peptide. A propeptide spans 24–110 (STDVHNTDDK…MSVPDVEKLI (87 aa)) (activation peptide). Residues 160–473 (DYASYADMVK…EGFREVVDAV (314 aa)) form the Peptidase M14 domain. Zn(2+) is bound by residues His219 and Glu222. Residues 219 to 222 (HARE), Arg281, and 306 to 307 (NR) each bind substrate. Residue His361 participates in Zn(2+) binding. Residue 362–363 (SY) coordinates substrate. The active-site Proton donor/acceptor is Glu437. Over residues 512-543 (ASQAAGSTTRSTTTLKTSTTSVSTTSEATSPS) the composition is skewed to low complexity. The interval 512-590 (ASQAAGSTTR…TTTTEEEDVT (79 aa)) is disordered. Residues 564 to 573 (PTPPMAPPIM) are compositionally biased toward pro residues. Residues 574–583 (SPSTEFSTTT) show a composition bias toward low complexity. Residues 621–657 (CRDMRYSCGFWLKNNKQVCEEQQSFMRAQCAYTCKFC) enclose the ShKT domain. Cystine bridges form between Cys621/Cys657, Cys628/Cys650, and Cys639/Cys654.

The protein belongs to the peptidase M14 family. Zn(2+) is required as a cofactor. In terms of tissue distribution, localizes in stripes along the cuticle.

The protein resides in the cytoplasmic vesicle. Its subcellular location is the secreted. Functionally, may play a role in processing or organization of cuticle collagen proteins, including rol-6 and col-19. The polypeptide is Putative carboxypeptidase suro-1 (Caenorhabditis elegans).